The following is a 541-amino-acid chain: DNA ligase 1 (541 aa).

Glu-234 provides a ligand contact to ATP. Lys-236 acts as the N6-AMP-lysine intermediate in catalysis. The ATP site is built by Arg-241, Arg-256, Glu-286, Phe-325, Arg-398, and Lys-404.

This sequence belongs to the ATP-dependent DNA ligase family. Mg(2+) serves as cofactor.

The enzyme catalyses ATP + (deoxyribonucleotide)n-3'-hydroxyl + 5'-phospho-(deoxyribonucleotide)m = (deoxyribonucleotide)n+m + AMP + diphosphate.. Its function is as follows. DNA ligase that seals nicks in double-stranded DNA during DNA replication, DNA recombination and DNA repair. This is DNA ligase 1 from Korarchaeum cryptofilum (strain OPF8).